Reading from the N-terminus, the 665-residue chain is non-specific serine/threonine protein kinase (665 aa).

The 453-residue stretch at 145 to 597 folds into the Protein kinase domain; it reads FDVHCRIGSG…AEEALKHPFF (453 aa). ATP is bound by residues 151 to 159 and lysine 181; that span reads IGSGTFSTV. Aspartate 268 functions as the Proton acceptor in the catalytic mechanism.

Belongs to the protein kinase superfamily. Ser/Thr protein kinase family. Interacts with chif (via N-terminus).

It catalyses the reaction L-seryl-[protein] + ATP = O-phospho-L-seryl-[protein] + ADP + H(+). The catalysed reaction is L-threonyl-[protein] + ATP = O-phospho-L-threonyl-[protein] + ADP + H(+). Functionally, probable serine/threonine protein kinase that forms a complex with the N-terminal peptide of the chiffon protein and may be involved in regulating meiotic processes in the male testis. The sequence is that of non-specific serine/threonine protein kinase from Drosophila melanogaster (Fruit fly).